Reading from the N-terminus, the 335-residue chain is Putative SWIB domain-containing protein R508 (335 aa).

Positions 1 to 12 (MSKRVTSSKKSK) are enriched in basic residues. The segment at 1 to 182 (MSKRVTSSKK…NKKSPKKLLN (182 aa)) is disordered. Positions 24–33 (KNLSKTSKSV) are enriched in low complexity. Over residues 60-75 (NIGGSKSSRTYNSEGS) the composition is skewed to polar residues. The segment covering 83–109 (SSKDSKVIKKNKQKVESSDSEKHSENK) has biased composition (basic and acidic residues). Residues 110-126 (SHKKSSKSSSISRKKPI) show a composition bias toward basic residues. Residues 163–173 (KGEDNNDEKQN) show a composition bias toward basic and acidic residues. Residues 181 to 217 (LNEKKISSESFDDKLNELREELRENYIRQKKIMNDIK) adopt a coiled-coil conformation. The region spanning 244–326 (GFNKPQTVPQ…QTWLKKVYNE (83 aa)) is the SWIB/MDM2 domain.

The chain is Putative SWIB domain-containing protein R508 from Acanthamoeba polyphaga mimivirus (APMV).